A 616-amino-acid chain; its full sequence is Homeodomain-interacting protein kinase 4 (616 aa).

In terms of domain architecture, Protein kinase spans 11 to 347 (YDIIEVLGKG…PSAALRHPFV (337 aa)). Residues 17–25 (LGKGTFGEV) and K40 contribute to the ATP site. D136 serves as the catalytic Proton acceptor. Positions 487–616 (HKARKAPAGS…SFLQHVGGHH (130 aa)) are disordered. Residues 497–512 (KSDSNFSNLIRLSQAS) are compositionally biased toward polar residues. S512 bears the Phosphoserine mark. Positions 542-560 (REGDGPSIKDRPMDAERSG) are enriched in basic and acidic residues.

It belongs to the protein kinase superfamily. CMGC Ser/Thr protein kinase family. HIPK subfamily. Post-translationally, autophosphorylated.

It localises to the cytoplasm. The catalysed reaction is L-seryl-[protein] + ATP = O-phospho-L-seryl-[protein] + ADP + H(+). It catalyses the reaction L-threonyl-[protein] + ATP = O-phospho-L-threonyl-[protein] + ADP + H(+). In terms of biological role, protein kinase that phosphorylates TP53, and thus induces TP53 repression of BIRC5 promoter. May act as a corepressor of transcription factors (Potential). In Rattus norvegicus (Rat), this protein is Homeodomain-interacting protein kinase 4 (Hipk4).